We begin with the raw amino-acid sequence, 1402 residues long: DNA-directed RNA polymerase subunit beta' (1402 aa).

Zn(2+) is bound by residues C71, C73, C86, and C89. Residues D462, D464, and D466 each coordinate Mg(2+). Zn(2+) contacts are provided by C811, C885, C892, and C895. The segment at 1379–1402 (RKGTGAGSANQMLQDMTDQVPAAE) is disordered. A compositionally biased stretch (polar residues) spans 1385–1395 (GSANQMLQDMT).

Belongs to the RNA polymerase beta' chain family. As to quaternary structure, the RNAP catalytic core consists of 2 alpha, 1 beta, 1 beta' and 1 omega subunit. When a sigma factor is associated with the core the holoenzyme is formed, which can initiate transcription. Mg(2+) serves as cofactor. Zn(2+) is required as a cofactor.

The enzyme catalyses RNA(n) + a ribonucleoside 5'-triphosphate = RNA(n+1) + diphosphate. DNA-dependent RNA polymerase catalyzes the transcription of DNA into RNA using the four ribonucleoside triphosphates as substrates. In Agrobacterium fabrum (strain C58 / ATCC 33970) (Agrobacterium tumefaciens (strain C58)), this protein is DNA-directed RNA polymerase subunit beta'.